The sequence spans 427 residues: Glutamate-1-semialdehyde 2,1-aminomutase (427 aa).

At K265 the chain carries N6-(pyridoxal phosphate)lysine.

This sequence belongs to the class-III pyridoxal-phosphate-dependent aminotransferase family. HemL subfamily. As to quaternary structure, homodimer. Requires pyridoxal 5'-phosphate as cofactor.

The protein localises to the cytoplasm. It carries out the reaction (S)-4-amino-5-oxopentanoate = 5-aminolevulinate. It participates in porphyrin-containing compound metabolism; protoporphyrin-IX biosynthesis; 5-aminolevulinate from L-glutamyl-tRNA(Glu): step 2/2. This is Glutamate-1-semialdehyde 2,1-aminomutase from Neisseria meningitidis serogroup C / serotype 2a (strain ATCC 700532 / DSM 15464 / FAM18).